Here is a 304-residue protein sequence, read N- to C-terminus: Homoserine kinase (304 aa).

ATP is bound at residue Pro-90–Ser-100.

It belongs to the GHMP kinase family. Homoserine kinase subfamily.

The protein resides in the cytoplasm. It carries out the reaction L-homoserine + ATP = O-phospho-L-homoserine + ADP + H(+). The protein operates within amino-acid biosynthesis; L-threonine biosynthesis; L-threonine from L-aspartate: step 4/5. Catalyzes the ATP-dependent phosphorylation of L-homoserine to L-homoserine phosphate. This Staphylococcus aureus (strain MSSA476) protein is Homoserine kinase.